The chain runs to 328 residues: Glycerol-3-phosphate dehydrogenase [NAD(P)+] (328 aa).

NADPH is bound by residues W11, R30, and K103. Positions 103, 132, and 134 each coordinate sn-glycerol 3-phosphate. A136 is a binding site for NADPH. The sn-glycerol 3-phosphate site is built by K187, D240, S250, R251, and N252. K187 serves as the catalytic Proton acceptor. R251 lines the NADPH pocket. 2 residues coordinate NADPH: V275 and E277.

This sequence belongs to the NAD-dependent glycerol-3-phosphate dehydrogenase family.

Its subcellular location is the cytoplasm. It catalyses the reaction sn-glycerol 3-phosphate + NAD(+) = dihydroxyacetone phosphate + NADH + H(+). The catalysed reaction is sn-glycerol 3-phosphate + NADP(+) = dihydroxyacetone phosphate + NADPH + H(+). The protein operates within membrane lipid metabolism; glycerophospholipid metabolism. Functionally, catalyzes the reduction of the glycolytic intermediate dihydroxyacetone phosphate (DHAP) to sn-glycerol 3-phosphate (G3P), the key precursor for phospholipid synthesis. This Thiobacillus denitrificans (strain ATCC 25259 / T1) protein is Glycerol-3-phosphate dehydrogenase [NAD(P)+].